Here is a 660-residue protein sequence, read N- to C-terminus: GRIP and coiled-coil domain-containing protein 2 (660 aa).

The disordered stretch occupies residues 1–28; the sequence is MSAPESSISPVPPPGSSSGGGKKLDSLP. Coiled coils occupy residues 30–92, 115–464, and 517–596; these read EDLV…VENN, EWKE…KAIA, and DEYR…EYLK. The region spanning 585 to 636 is the GRIP domain; it reads ELSNEKNMEYLKNVFVQFLKPESVPAERDQLVIVLQRVLHLSPKEVEILKAA.

The sequence is that of GRIP and coiled-coil domain-containing protein 2 from Caenorhabditis elegans.